An 81-amino-acid chain; its full sequence is Protein RALF-like 6 (81 aa).

The signal sequence occupies residues 1–29; the sequence is MAAHKKSHIRIFFVSVMIILSLFSGFGEG. Cystine bridges form between cysteine 46/cysteine 54 and cysteine 66/cysteine 72.

The protein belongs to the plant rapid alkalinization factor (RALF) family.

It is found in the secreted. Cell signaling peptide that may regulate plant stress, growth, and development. Mediates a rapid alkalinization of extracellular space by mediating a transient increase in the cytoplasmic Ca(2+) concentration leading to a calcium-dependent signaling events through a cell surface receptor and a concomitant activation of some intracellular mitogen-activated protein kinases. The polypeptide is Protein RALF-like 6 (RALFL6) (Arabidopsis thaliana (Mouse-ear cress)).